Here is a 276-residue protein sequence, read N- to C-terminus: Elongation factor Ts, mitochondrial (276 aa).

The protein belongs to the EF-Ts family.

Its subcellular location is the mitochondrion. Associates with the EF-Tu.GDP complex and induces the exchange of GDP to GTP. It remains bound to the aminoacyl-tRNA.EF-Tu.GTP complex up to the GTP hydrolysis stage on the ribosome. This Leishmania braziliensis protein is Elongation factor Ts, mitochondrial.